Consider the following 475-residue polypeptide: Aspartyl/glutamyl-tRNA(Asn/Gln) amidotransferase subunit B (475 aa).

It belongs to the GatB/GatE family. GatB subfamily. Heterotrimer of A, B and C subunits.

The catalysed reaction is L-glutamyl-tRNA(Gln) + L-glutamine + ATP + H2O = L-glutaminyl-tRNA(Gln) + L-glutamate + ADP + phosphate + H(+). The enzyme catalyses L-aspartyl-tRNA(Asn) + L-glutamine + ATP + H2O = L-asparaginyl-tRNA(Asn) + L-glutamate + ADP + phosphate + 2 H(+). Its function is as follows. Allows the formation of correctly charged Asn-tRNA(Asn) or Gln-tRNA(Gln) through the transamidation of misacylated Asp-tRNA(Asn) or Glu-tRNA(Gln) in organisms which lack either or both of asparaginyl-tRNA or glutaminyl-tRNA synthetases. The reaction takes place in the presence of glutamine and ATP through an activated phospho-Asp-tRNA(Asn) or phospho-Glu-tRNA(Gln). This is Aspartyl/glutamyl-tRNA(Asn/Gln) amidotransferase subunit B from Staphylococcus haemolyticus (strain JCSC1435).